Here is a 195-residue protein sequence, read N- to C-terminus: Sec-independent protein translocase protein TatB (195 aa).

A helical membrane pass occupies residues 2–22; that stretch reads FSNVGWGEVLVLLIVALFLIG. Residues 103-125 are compositionally biased toward basic and acidic residues; sequence VKDTVDTVRKPNLRESLKADKTK. The disordered stretch occupies residues 103–195; it reads VKDTVDTVRK…APGYGWEDVT (93 aa). Polar residues-rich tracts occupy residues 127 to 139 and 146 to 155; these read SAQP…SGSA and VTQQSNAGES.

Belongs to the TatB family. The Tat system comprises two distinct complexes: a TatABC complex, containing multiple copies of TatA, TatB and TatC subunits, and a separate TatA complex, containing only TatA subunits. Substrates initially bind to the TatABC complex, which probably triggers association of the separate TatA complex to form the active translocon.

Its subcellular location is the cell membrane. In terms of biological role, part of the twin-arginine translocation (Tat) system that transports large folded proteins containing a characteristic twin-arginine motif in their signal peptide across membranes. Together with TatC, TatB is part of a receptor directly interacting with Tat signal peptides. TatB may form an oligomeric binding site that transiently accommodates folded Tat precursor proteins before their translocation. This is Sec-independent protein translocase protein TatB from Corynebacterium jeikeium (strain K411).